Here is a 251-residue protein sequence, read N- to C-terminus: DNA repair protein RecO (251 aa).

This sequence belongs to the RecO family.

Functionally, involved in DNA repair and RecF pathway recombination. This is DNA repair protein RecO from Lactococcus lactis subsp. cremoris (strain MG1363).